Consider the following 308-residue polypeptide: Probable pyridoxal 5'-phosphate synthase subunit pdx-1 (308 aa).

D-ribose 5-phosphate is bound at residue aspartate 30. Catalysis depends on lysine 87, which acts as the Schiff-base intermediate with D-ribose 5-phosphate. Glycine 159 provides a ligand contact to D-ribose 5-phosphate. Arginine 171 contributes to the D-glyceraldehyde 3-phosphate binding site. Residues glycine 224 and 245–246 (GS) each bind D-ribose 5-phosphate.

The protein belongs to the PdxS/SNZ family.

The enzyme catalyses aldehydo-D-ribose 5-phosphate + D-glyceraldehyde 3-phosphate + L-glutamine = pyridoxal 5'-phosphate + L-glutamate + phosphate + 3 H2O + H(+). Its pathway is cofactor biosynthesis; pyridoxal 5'-phosphate biosynthesis. Its function is as follows. Catalyzes the formation of pyridoxal 5'-phosphate from ribose 5-phosphate (RBP), glyceraldehyde 3-phosphate (G3P) and ammonia. The ammonia is provided by pdx-2. Can also use ribulose 5-phosphate and dihydroxyacetone phosphate as substrates, resulting from enzyme-catalyzed isomerization of RBP and G3P, respectively. Also plays an indirect role in resistance to singlet oxygen-generating photosensitizers. In Neurospora crassa (strain ATCC 24698 / 74-OR23-1A / CBS 708.71 / DSM 1257 / FGSC 987), this protein is Probable pyridoxal 5'-phosphate synthase subunit pdx-1 (pdx-1).